The chain runs to 1029 residues: Protein translocase subunit SecA (1029 aa).

ATP contacts are provided by residues Gln-143, 161 to 165 (GEGKT), and Asp-661. The disordered stretch occupies residues 953-1029 (EQEQKKSQVQ…GKKYKNCCGK (77 aa)). Basic and acidic residues-rich tracts occupy residues 966–975 (LVARHEKAET) and 984–996 (PEGR…ENGK). Residues Cys-1015, Cys-1017, Cys-1026, and Cys-1027 each coordinate Zn(2+).

Belongs to the SecA family. Monomer and homodimer. Part of the essential Sec protein translocation apparatus which comprises SecA, SecYEG and auxiliary proteins SecDF. Other proteins may also be involved. Requires Zn(2+) as cofactor.

The protein localises to the cell inner membrane. The protein resides in the cytoplasm. It carries out the reaction ATP + H2O + cellular proteinSide 1 = ADP + phosphate + cellular proteinSide 2.. Its function is as follows. Part of the Sec protein translocase complex. Interacts with the SecYEG preprotein conducting channel. Has a central role in coupling the hydrolysis of ATP to the transfer of proteins into and across the cell membrane, serving as an ATP-driven molecular motor driving the stepwise translocation of polypeptide chains across the membrane. This chain is Protein translocase subunit SecA, found in Chlorobium phaeobacteroides (strain BS1).